The following is a 253-amino-acid chain: 1-(5-phosphoribosyl)-5-[(5-phosphoribosylamino)methylideneamino] imidazole-4-carboxamide isomerase (253 aa).

Asp19 functions as the Proton acceptor in the catalytic mechanism. Asp141 (proton donor) is an active-site residue.

This sequence belongs to the HisA/HisF family.

It is found in the cytoplasm. The catalysed reaction is 1-(5-phospho-beta-D-ribosyl)-5-[(5-phospho-beta-D-ribosylamino)methylideneamino]imidazole-4-carboxamide = 5-[(5-phospho-1-deoxy-D-ribulos-1-ylimino)methylamino]-1-(5-phospho-beta-D-ribosyl)imidazole-4-carboxamide. Its pathway is amino-acid biosynthesis; L-histidine biosynthesis; L-histidine from 5-phospho-alpha-D-ribose 1-diphosphate: step 4/9. The polypeptide is 1-(5-phosphoribosyl)-5-[(5-phosphoribosylamino)methylideneamino] imidazole-4-carboxamide isomerase (Rhodopirellula baltica (strain DSM 10527 / NCIMB 13988 / SH1)).